Reading from the N-terminus, the 811-residue chain is DNA gyrase subunit A (811 aa).

Residues 30–493 form the Topo IIA-type catalytic domain; that stretch reads LPDVRDGLKP…LEEDIGKEDL (464 aa). Tyr118 (O-(5'-phospho-DNA)-tyrosine intermediate) is an active-site residue. The short motif at 520–526 is the GyrA-box element; the sequence is QGRGGRG.

The protein belongs to the type II topoisomerase GyrA/ParC subunit family. Heterotetramer, composed of two GyrA and two GyrB chains. In the heterotetramer, GyrA contains the active site tyrosine that forms a transient covalent intermediate with DNA, while GyrB binds cofactors and catalyzes ATP hydrolysis.

It localises to the cytoplasm. It catalyses the reaction ATP-dependent breakage, passage and rejoining of double-stranded DNA.. A type II topoisomerase that negatively supercoils closed circular double-stranded (ds) DNA in an ATP-dependent manner to modulate DNA topology and maintain chromosomes in an underwound state. Negative supercoiling favors strand separation, and DNA replication, transcription, recombination and repair, all of which involve strand separation. Also able to catalyze the interconversion of other topological isomers of dsDNA rings, including catenanes and knotted rings. Type II topoisomerases break and join 2 DNA strands simultaneously in an ATP-dependent manner. The protein is DNA gyrase subunit A of Deinococcus deserti (strain DSM 17065 / CIP 109153 / LMG 22923 / VCD115).